The chain runs to 200 residues: Potassium-transporting ATPase KdpC subunit (200 aa).

Residues 6–26 (PAVVLLILLTLITGIAYPLLT) form a helical membrane-spanning segment.

The protein belongs to the KdpC family. As to quaternary structure, the system is composed of three essential subunits: KdpA, KdpB and KdpC.

The protein localises to the cell inner membrane. In terms of biological role, part of the high-affinity ATP-driven potassium transport (or Kdp) system, which catalyzes the hydrolysis of ATP coupled with the electrogenic transport of potassium into the cytoplasm. This subunit acts as a catalytic chaperone that increases the ATP-binding affinity of the ATP-hydrolyzing subunit KdpB by the formation of a transient KdpB/KdpC/ATP ternary complex. The protein is Potassium-transporting ATPase KdpC subunit of Yersinia enterocolitica serotype O:8 / biotype 1B (strain NCTC 13174 / 8081).